The chain runs to 182 residues: Ribosome-recycling factor (182 aa).

The disordered stretch occupies residues 136–160; that stretch reads VKKSEKDGDLSEDQSRDEQETIQKE.

Belongs to the RRF family.

The protein localises to the cytoplasm. Responsible for the release of ribosomes from messenger RNA at the termination of protein biosynthesis. May increase the efficiency of translation by recycling ribosomes from one round of translation to another. In Prochlorococcus marinus (strain NATL2A), this protein is Ribosome-recycling factor.